The chain runs to 262 residues: Phosphatidylserine decarboxylase proenzyme (262 aa).

Active-site charge relay system; for autoendoproteolytic cleavage activity residues include D86, H142, and S226. S226 serves as the catalytic Schiff-base intermediate with substrate; via pyruvic acid; for decarboxylase activity. S226 carries the pyruvic acid (Ser); by autocatalysis modification.

It belongs to the phosphatidylserine decarboxylase family. PSD-B subfamily. Prokaryotic type I sub-subfamily. As to quaternary structure, heterodimer of a large membrane-associated beta subunit and a small pyruvoyl-containing alpha subunit. Pyruvate is required as a cofactor. In terms of processing, is synthesized initially as an inactive proenzyme. Formation of the active enzyme involves a self-maturation process in which the active site pyruvoyl group is generated from an internal serine residue via an autocatalytic post-translational modification. Two non-identical subunits are generated from the proenzyme in this reaction, and the pyruvate is formed at the N-terminus of the alpha chain, which is derived from the carboxyl end of the proenzyme. The autoendoproteolytic cleavage occurs by a canonical serine protease mechanism, in which the side chain hydroxyl group of the serine supplies its oxygen atom to form the C-terminus of the beta chain, while the remainder of the serine residue undergoes an oxidative deamination to produce ammonia and the pyruvoyl prosthetic group on the alpha chain. During this reaction, the Ser that is part of the protease active site of the proenzyme becomes the pyruvoyl prosthetic group, which constitutes an essential element of the active site of the mature decarboxylase.

The protein resides in the cell membrane. It carries out the reaction a 1,2-diacyl-sn-glycero-3-phospho-L-serine + H(+) = a 1,2-diacyl-sn-glycero-3-phosphoethanolamine + CO2. The protein operates within phospholipid metabolism; phosphatidylethanolamine biosynthesis; phosphatidylethanolamine from CDP-diacylglycerol: step 2/2. Catalyzes the formation of phosphatidylethanolamine (PtdEtn) from phosphatidylserine (PtdSer). This is Phosphatidylserine decarboxylase proenzyme from Bacillus thuringiensis (strain Al Hakam).